The chain runs to 555 residues: Carboxysome assembly protein CcmM (555 aa).

Residues 1–209 (MAVRSTAAPP…CIAPLRNDQV (209 aa)) form a has carbonic anhydrase (CA) activity region. The active-site Proton donor/acceptor is glutamate 56. Zn(2+) contacts are provided by histidine 75, histidine 102, and histidine 107. A disulfide bond links cysteine 194 and cysteine 200. Residues 223-315 (SSEVASNSLG…RVLETIIQRP (93 aa)) form a rbcS-like repeat 1, SSUL1 region. Disordered regions lie at residues 323-351 (TSFK…SNGA) and 441-464 (NGQV…SGTA). Composition is skewed to low complexity over residues 330 to 351 (SNTN…SNGA) and 445 to 464 (APSS…SGTA). Residues 347–440 (YSNGATSGKV…RVLESIIQRP (94 aa)) form a rbcS-like repeat 2, SSUL2 region. Residues 460–555 (SSGTATATAT…RVLETIIQRP (96 aa)) are rbcS-like repeat 3, SSUL3.

The protein belongs to the gamma-class carbonic anhydrase family. In terms of assembly, probable homotrimer; zinc is bound between adjacent monomers. Full length protein (M58) interacts with CcmN. The C-terminal RbcS-like domains (SSUL) bind to holo-RuBisCO, as does the M35 short form. It depends on Zn(2+) as a cofactor. Post-translationally, the first amino acid of the short form (equivalent to Val-226) is not seen in Edman degradation, while Ser-230 may be post-translationally modified. Migrates in gels as 2 about equal forms of about 60 and 35 kDa (called M58 and M35). They are probably the result of alternative translation initiation.

The protein resides in the carboxysome. It is found in the cytoplasm. The catalysed reaction is hydrogencarbonate + H(+) = CO2 + H2O. Carbonic anhydrase (CA) activity is probably under redox control to remain inactive in the cytoplasm. Carbonic anhydrase (CA) activity of full-length protein and N-terminal fragment is inhibited by ethoxyzolamide. N-terminal fragment CA activity is activated under oxidizing conditions and inhibited under reducing conditions. Its function is as follows. Functions as a scaffold protein for the assembly of beta-carboxysomes, initiates carboxysome assembly by coalescing RuBisCO (ribulose bisphosphate carboxylase, rbcL-rbcS). Produced as a full-length (M58) and a short form (M35), possibly by alternative translation initiation; probably both forms are required for correct carboxysome assembly and growth. In this strain both forms are equally abundant. In terms of biological role, a moderately active carbonic anhydrase that catalyzes the reversible hydration of carbon dioxide. Essential to photosynthetic carbon dioxide fixation, supplies CO(2) to ribulose bisphosphate carboxylase (RuBisCO) in the carboxysome. Also hydrolyzes COS. Beta-carboxysome assembly initiates when soluble RuBisCO is condensed into a liquid matrix in a pre-carboxysome by the RbcS-like domains of probably both forms of CcmM. CcmN interacts with the N-terminus of full length CcmM, and then recruits the shell proteins (CcmK) via CcmN's encapsulation peptide. Shell formation requires both CcmK proteins and CcmO. CcmL caps the otherwise elongated carboxysome. Once fully encapsulated carboxysomes are formed, they migrate within the cell probably via interactions with the cytoskeleton. The protein is Carboxysome assembly protein CcmM of Nostoc sp. (strain PCC 7120 / SAG 25.82 / UTEX 2576).